We begin with the raw amino-acid sequence, 1132 residues long: MATSNHKKQYTTLSDIDHVLLRPEVIIGSTVPMEQTEYVVDENFSEILEKQVFVSEALIRIFVEVLANAVDNIHRSKGSSTPCKSIKIKIEDDGTTMIHNDGQVIKISKEENDGIEINGKKCSVYNHELVFGHLRSSSNYDDTVVRQTSGKNGLGVKCTNILSKSFKVIGVDPENKKKFVQEWTNNMKETSGPKVTTSSSKTGYTEVIYCPDFERLGNFSSDIIGIFRKHVLDVAMLASSEGVSVYFNDKKLPIKKFSDYTKLFKLEKESISITEEDGSSEVTIAFVERDGKKKPISFVNGLFTKHGGQHVDGWTKPFFANLLSVLNKPSKTYKDLKLSLKDVTPYFRFFVKSTVDKPQFDCQNKNMLKSPCLKYTIPDKIITKVCKWTSVQELKQSSFEKLLKGKDNNIIKTLNDKKRRPKVSVKEYDPANKAGTTLSEKCTLIVCEGLSAKTYAVAGISTGISFTGTDTKKGRDWFGILPLRGKFLNVRNANNDKMIKNTVVTDLVNAMGLTFGMDYSTQKSRKSLNYGSIIIIPDPDEDGIHIEGLVLNFFHHHFSSLFNPVVPNLKDFPFISSMKIPIIKVIEKPLKGRREIEFFTHEAFHKFKNENKWHKNHEIKYFKGLGTTKHEDVPKIFGKKMVVFNIDDNAHENMEKAFKDEEADERKEWLKQYNPNARTFDLDSPNKILQLNISTFINEELIKFSIEDCKRSLPHLIDGLKESQRKVIFGLKQWNGKNNIKVAQLGAFVAQKTDYKHGEQNLFDTIIKMAQTFVGANNIPLLEEDGQFGTRLSGGKDAASPRYIFVNQPPILNKIFRPEDDPILNYTLDGEPVFYAPVIPLICINGSVGVGTGFSCNIPMFNPSEIIDGLKQWINMREQGEKYVFKYKPWYKGFTGKIEKNGSGRYISYGTLSNEASNNGMYQYTVSELPINMWTDKFKEMCDQYRESNLIKTCDNYSEVTTVNFKISSEHELTIENLKLRSYIHTSNMVMFDHEGKIHKYETLNGIMQRFCKERIKIYEKRRQYMLQKLNKSLTISENKKRFMEDVMNQKIKILLQEDEVVHQQLLDMNYYKDDEGEFDYLLNMNIGGFRKKNVDKLISKIDDLKKDIMWYTNTNEGQMWLKDILELEPFI.

Residues N68, N100, 137-139 (SSN), and 150-157 (GKNGLGVK) contribute to the ATP site. The interval 327-329 (NKP) is interaction with DNA. Residue 363–365 (QNK) coordinates ATP. A Toprim domain is found at 442-577 (CTLIVCEGLS…NLKDFPFISS (136 aa)). E448, D538, and D540 together coordinate Mg(2+). A Topo IIA-type catalytic domain is found at 713-1125 (LPHLIDGLKE…NEGQMWLKDI (413 aa)). Y803 serves as the catalytic O-(5'-phospho-DNA)-tyrosine intermediate. An interaction with DNA region spans residues 979 to 988 (KLRSYIHTSN).

This sequence belongs to the type II topoisomerase family. The cofactor is Mg(2+). Requires Mn(2+) as cofactor. It depends on Ca(2+) as a cofactor.

It carries out the reaction ATP-dependent breakage, passage and rejoining of double-stranded DNA.. Functionally, can introduce negative superhelical turns into double-stranded circular DNA. The chain is DNA topoisomerase 2 (TOP2) from Acheta domesticus (House cricket).